Here is a 420-residue protein sequence, read N- to C-terminus: Glycogen synthase kinase-3 beta (420 aa).

Polar residues predominate over residues M1–A22. The interval M1–E53 is disordered. S9 carries the post-translational modification Phosphoserine; by PKB/AKT1, RPS6KA3 and SGK3. C14 carries the S-palmitoyl cysteine lipid modification. One can recognise a Protein kinase domain in the interval Y56–F340. ATP is bound by residues I62–V70 and K85. Residue D181 is the Proton acceptor of the active site. At Y216 the chain carries Phosphotyrosine. Positions Q385–T420 are disordered. Low complexity-rich tracts occupy residues A386–N401 and N409–T420. S389 carries the post-translational modification Phosphoserine.

It belongs to the protein kinase superfamily. CMGC Ser/Thr protein kinase family. GSK-3 subfamily. Monomer. Interacts with DAB2IP (via C2 domain); the interaction stimulates GSK3B kinase activation. Interacts (via C2 domain) with PPP2CA. Interacts with ARRB2, AXIN1, CABYR, DISC1, MMP2, MUC1, NIN, PRUNE1 and ZBED3. Interacts with AXIN1; the interaction mediates hyperphosphorylation of CTNNB1 leading to its ubiquitination and destruction. Interacts with and phosphorylates SNAI1. Interacts with DNM1L (via a C-terminal domain). Found in a complex composed of MACF1, APC, AXIN1, CTNNB1 and GSK3B. Interacts with SGK3. Interacts with the CLOCK-BMAL1 heterodimer. Interacts with the BMAL1. Interacts with CTNND2. The complex composed, at least, of APC, CTNNB1 and GSK3B interacts with JPT1; the interaction requires the inactive form of GSK3B (phosphorylated at 'Ser-9'). Forms a complex composed of PRKAR2A or PRKAR2B, GSK3B and GSKIP through GSKIP interaction; facilitates PKA-induced phosphorylation and regulates GSK3B activity. Interacts with GSKIP. Interacts with GID8. Interacts with PIWIL2. Interacts with LMBR1L. Interacts with DDX3X. Interacts with BIRC2. Interacts with TNFRSF10B; TNFRSF10B stimulation inhibits GSK3B kinase activity. Found in a complex with SLC39A6, SLC39A10 and with GSK3B that controls NCAM1 phosphorylation. Interacts with PKP3 (via ARM repeats); the interaction may be involved in PKP3 protein degradation. Phosphorylated by AKT1 and ILK1. Upon insulin-mediated signaling, the activated PKB/AKT1 and RPS6KA3 protein kinases phosphorylate and deactivate GSK3B, resulting in the dephosphorylation and activation of GYS1. Activated by phosphorylation at Tyr-216. Inactivated by phosphorylation at Ser-9. Phosphorylated in a circadian manner in the hippocampus. Post-translationally, mono-ADP-ribosylation by PARP10 negatively regulates kinase activity. In terms of processing, palmitoylated. Palmitoylation by ZDHHC4 prevents AKT1-mediated phosphorylation.

Its subcellular location is the cytoplasm. It localises to the nucleus. The protein resides in the membrane. It is found in the cell membrane. The catalysed reaction is L-seryl-[tau protein] + ATP = O-phospho-L-seryl-[tau protein] + ADP + H(+). It catalyses the reaction L-threonyl-[tau protein] + ATP = O-phospho-L-threonyl-[tau protein] + ADP + H(+). The enzyme catalyses L-seryl-[protein] + ATP = O-phospho-L-seryl-[protein] + ADP + H(+). It carries out the reaction L-threonyl-[protein] + ATP = O-phospho-L-threonyl-[protein] + ADP + H(+). Activated by phosphorylation at Tyr-216. In response to insulin, inhibited by phosphorylation at Ser-9 by PKB/AKT1; phosphorylation at this site causes a conformational change, preventing access of substrates to the active site. Inhibited by IL22 treatment which also triggers phosphorylation at Ser-9, promoting inactivation. Inhibited by lithium. Functionally, constitutively active protein kinase that acts as a negative regulator in the hormonal control of glucose homeostasis, Wnt signaling and regulation of transcription factors and microtubules, by phosphorylating and inactivating glycogen synthase (GYS1 or GYS2), EIF2B, CTNNB1/beta-catenin, APC, AXIN1, DPYSL2/CRMP2, JUN, NFATC1/NFATC, MAPT/TAU and MACF1. Requires primed phosphorylation of the majority of its substrates. In skeletal muscle, contributes to insulin regulation of glycogen synthesis by phosphorylating and inhibiting GYS1 activity and hence glycogen synthesis. May also mediate the development of insulin resistance by regulating activation of transcription factors. Regulates protein synthesis by controlling the activity of initiation factor 2B (EIF2BE/EIF2B5) in the same manner as glycogen synthase. In Wnt signaling, GSK3B forms a multimeric complex with APC, AXIN1 and CTNNB1/beta-catenin and phosphorylates the N-terminus of CTNNB1 leading to its degradation mediated by ubiquitin/proteasomes. Phosphorylates JUN at sites proximal to its DNA-binding domain, thereby reducing its affinity for DNA. Phosphorylates NFATC1/NFATC on conserved serine residues promoting NFATC1/NFATC nuclear export, shutting off NFATC1/NFATC gene regulation, and thereby opposing the action of calcineurin. Phosphorylates MAPT/TAU on 'Thr-548', decreasing significantly MAPT/TAU ability to bind and stabilize microtubules. MAPT/TAU is the principal component of neurofibrillary tangles in Alzheimer disease. Plays an important role in ERBB2-dependent stabilization of microtubules at the cell cortex. Phosphorylates MACF1, inhibiting its binding to microtubules which is critical for its role in bulge stem cell migration and skin wound repair. Probably regulates NF-kappa-B (NFKB1) at the transcriptional level and is required for the NF-kappa-B-mediated anti-apoptotic response to TNF-alpha (TNF/TNFA). Negatively regulates replication in pancreatic beta-cells, resulting in apoptosis, loss of beta-cells and diabetes. Through phosphorylation of the anti-apoptotic protein MCL1, may control cell apoptosis in response to growth factors deprivation. Phosphorylates MUC1 in breast cancer cells, decreasing the interaction of MUC1 with CTNNB1/beta-catenin. Is necessary for the establishment of neuronal polarity and axon outgrowth. Phosphorylates MARK2, leading to inhibition of its activity. Phosphorylates SIK1 at 'Thr-182', leading to sustainment of its activity. Phosphorylates ZC3HAV1 which enhances its antiviral activity. Phosphorylates SNAI1, leading to its ubiquitination and proteasomal degradation. Phosphorylates SFPQ at 'Thr-687' upon T-cell activation. Phosphorylates NR1D1 st 'Ser-55' and 'Ser-59' and stabilizes it by protecting it from proteasomal degradation. Regulates the circadian clock via phosphorylation of the major clock components including BMAL1, CLOCK and PER2. Phosphorylates CLOCK AT 'Ser-427' and targets it for proteasomal degradation. Phosphorylates BMAL1 at 'Ser-17' and 'Ser-21' and primes it for ubiquitination and proteasomal degradation. Phosphorylates FBXL2 at 'Thr-404' and primes it for ubiquitination by the SCF(FBXO3) complex and proteasomal degradation. Phosphorylates OGT at 'Ser-3' or 'Ser-4' which positively regulates its activity. Phosphorylates MYCN in neuroblastoma cells which may promote its degradation. Regulates the circadian rhythmicity of hippocampal long-term potentiation and BMAL1 and PER2 expression. Acts as a regulator of autophagy by mediating phosphorylation of KAT5/TIP60 under starvation conditions, activating KAT5/TIP60 acetyltransferase activity and promoting acetylation of key autophagy regulators, such as ULK1 and RUBCNL/Pacer. Negatively regulates extrinsic apoptotic signaling pathway via death domain receptors. Promotes the formation of an anti-apoptotic complex, made of DDX3X, BRIC2 and GSK3B, at death receptors, including TNFRSF10B. The anti-apoptotic function is most effective with weak apoptotic signals and can be overcome by stronger stimulation. Phosphorylates E2F1, promoting the interaction between E2F1 and USP11, stabilizing E2F1 and promoting its activity. Phosphorylates mTORC2 complex component RICTOR at 'Ser-1235' in response to endoplasmic stress, inhibiting mTORC2. Phosphorylates FXR1, promoting FXR1 ubiquitination by the SCF(FBXO4) complex and FXR1 degradation by the proteasome. Phosphorylates interleukin-22 receptor subunit IL22RA1, preventing its proteasomal degradation. The polypeptide is Glycogen synthase kinase-3 beta (Rattus norvegicus (Rat)).